A 760-amino-acid chain; its full sequence is GLC7-interacting protein 4 (760 aa).

Disordered stretches follow at residues 449–573 and 593–626; these read KKKP…SLQS and KSASTPNPSASSSLAPSPKVSSINNTSSGKSSST. 2 stretches are compositionally biased toward low complexity: residues 454-474 and 494-506; these read ITKLPASSSPSPSPTSSASPS and SSRSPSVSPVRTT. Ser497 and Ser501 each carry phosphoserine. A compositionally biased stretch (basic and acidic residues) spans 512–525; sequence AETKKSVVSPEKRK. Residues 534 to 554 are compositionally biased toward polar residues; it reads SSSLQSYTNKQQTSYLNSTRH. Composition is skewed to low complexity over residues 561 to 573 and 594 to 626; these read SKLNNQRSNSLQS and SASTPNPSASSSLAPSPKVSSINNTSSGKSSST. The residue at position 609 (Ser609) is a Phosphoserine.

The protein belongs to the GIP4 family. Interacts with GLC7.

The protein resides in the cytoplasm. Functionally, GLC7 phosphatase-regulatory protein involved in GLC7 subcellular redistribution and chromosome segregation. The chain is GLC7-interacting protein 4 (GIP4) from Saccharomyces cerevisiae (strain ATCC 204508 / S288c) (Baker's yeast).